The following is a 268-amino-acid chain: Protein MSS18 (268 aa).

It to baculovirus occlusion-derived virus envelope protein E27 (ODV-E27).

Its subcellular location is the mitochondrion. Involved in splicing of intron aI5-beta of the mitochondrial COX1 transcript. The chain is Protein MSS18 (MSS18) from Saccharomyces cerevisiae (strain ATCC 204508 / S288c) (Baker's yeast).